Here is a 314-residue protein sequence, read N- to C-terminus: Serine/threonine-protein phosphatase CPPED1 (314 aa).

Ser-2 is subject to Phosphoserine. A catalytic region spans residues 47-250; sequence KAWSTGDCDN…KVVFSGHYHR (204 aa). A divalent metal cation is bound by residues Asp-53, Asp-90, Asn-127, and His-247. Position 294 is a phosphoserine (Ser-294).

Belongs to the metallophosphoesterase superfamily. CPPED1 family. A divalent metal cation serves as cofactor.

Its subcellular location is the cytoplasm. The catalysed reaction is O-phospho-L-seryl-[protein] + H2O = L-seryl-[protein] + phosphate. It carries out the reaction O-phospho-L-threonyl-[protein] + H2O = L-threonyl-[protein] + phosphate. Functionally, protein phosphatase that dephosphorylates AKT family kinase specifically at 'Ser-473', blocking cell cycle progression and promoting cell apoptosis. May play an inhibitory role in glucose uptake by adipocytes. This chain is Serine/threonine-protein phosphatase CPPED1 (CPPED1), found in Pongo abelii (Sumatran orangutan).